The following is a 608-amino-acid chain: Serine/arginine repetitive matrix protein 4 (608 aa).

2 disordered regions span residues 34-246 and 261-608; these read ASIT…PLPR and SAAD…STRR. Basic and acidic residues predominate over residues 78 to 100; that stretch reads GREKACRELDPARAHSASQDRDP. Composition is skewed to basic residues over residues 107-123 and 131-187; these read RGKK…RRRS and VKKK…HRCP. The span at 188–200 shows a compositional bias: low complexity; the sequence is SRSQSSELRSPSC. Over residues 201–213 the composition is skewed to basic and acidic residues; it reads ESRHRGRSPEEGR. Basic residues predominate over residues 214-228; the sequence is KSRRTHSRRCSKNHC. Positions 289–299 are enriched in low complexity; it reads TSSPPSTQTSS. The segment covering 322–339 has biased composition (polar residues); the sequence is CGNTSDSGNSFTTSSPQN. Composition is skewed to low complexity over residues 389-420 and 428-459; these read RSSS…SRST and SRSP…SRYS. Positions 460-477 are enriched in basic and acidic residues; it reads PSRERDLKYGEKEPQPRE. The span at 478–494 shows a compositional bias: basic residues; it reads RARRRRRSYSPMRKRRR. A compositionally biased stretch (basic and acidic residues) spans 495 to 504; the sequence is DSPSHLEARR. The span at 518–555 shows a compositional bias: low complexity; the sequence is PSPSSSSSLSSASSWYSSSSSSSSSSSRSPSRSYSRSR. Basic residues predominate over residues 556–573; sequence SPSRSHSSRSQTRSRTRT. Over residues 574 to 608 the composition is skewed to low complexity; the sequence is SRSSSSRSLSLGSRSRSRNRSLSYSSAESYASTRR.

It belongs to the nSR100 family. Post-translationally, phosphorylated. As to expression, specifically expressed in neuronal cells (at protein level). Expressed in adult nervous system and sensory organ tissues.

It is found in the nucleus. In terms of biological role, splicing factor specifically required for neural cell differentiation. Acts in conjunction with nPTB/PTBP2 by binding directly to its regulated target transcripts and promotes neural-specific exon inclusion in many genes that function in neural cell differentiation. Required to promote the inclusion of neural-specific exon 10 in nPTB/PTBP2, leading to increased expression of neural-specific nPTB/PTBP2. Also promotes the inclusion of exon 16 in DAAM1 in neuron extracts. Promotes alternative splicing of REST transcripts to produce REST isoform 2 (REST4) with greatly reduced repressive activity, thereby activating expression of REST targets in neural cells. Plays an important role during embryonic development as well as in the proper functioning of the adult nervous system. Regulates alternative splicing events in genes with important neuronal functions. The protein is Serine/arginine repetitive matrix protein 4 (Srrm4) of Mus musculus (Mouse).